The following is a 248-amino-acid chain: Pulmonary surfactant-associated protein A1 (248 aa).

Positions 1–20 (MWLCPLALNLILMAASGAVC) are cleaved as a signal peptide. Positions 28-100 (GSPGIPGTPG…PGERGPPGLP (73 aa)) constitute a Collagen-like domain. 9 positions are modified to 4-hydroxyproline: P30, P33, P36, P42, P54, P57, P63, P67, and P70. A disordered region spans residues 31 to 101 (GIPGTPGSHG…GERGPPGLPA (71 aa)). Positions 42 to 51 (PGRDGRDGLK) are enriched in basic and acidic residues. Residues 54 to 70 (PGPPGPMGPPGEMPCPP) are compositionally biased toward pro residues. The 117-residue stretch at 132 to 248 (MTVGEKVFSS…LYSRLTICEF (117 aa)) folds into the C-type lectin domain. Intrachain disulfides connect C155/C246 and C224/C238. N-linked (GlcNAc...) asparagine glycosylation is present at N207.

Belongs to the SFTPA family. Oligomeric complex of 6 set of homotrimers. Interacts with CD93. As to quaternary structure, (Microbial infection) Binds M.bovis cell surface protein Apa via its glycosylated sites; probably also recognizes other bacterial moieties. In terms of assembly, (Microbial infection) Binds to the S.aureus extracellular adherence protein, Eap, thereby enhancing phagocytosis and killing of S.aureus by alveolar macrophages. (Microbial infection) Interacts with M.pneumoniae CARDS toxin; CARDS probably uses this protein as a receptor. In terms of processing, N-acetylated.

It localises to the secreted. Its subcellular location is the extracellular space. The protein resides in the extracellular matrix. The protein localises to the surface film. In terms of biological role, in presence of calcium ions, it binds to surfactant phospholipids and contributes to lower the surface tension at the air-liquid interface in the alveoli of the mammalian lung and is essential for normal respiration. Enhances the expression of MYO18A/SP-R210 on alveolar macrophages. Its function is as follows. (Microbial infection) Recognition of M.tuberculosis by dendritic cells may occur partially via this molecule. Can recognize, bind, and opsonize pathogens to enhance their elimination by alveolar macrophages. Functionally, (Microbial infection) Binds M.pneumoniae CARDS toxin, serves as one receptor for this pathogen. When SFTPA1 is down-regulated by siRNA, less toxin binds to human cells and less vacuolization (a symptom of M.pneumoniae infection) is seen. This chain is Pulmonary surfactant-associated protein A1 (SFTPA1), found in Homo sapiens (Human).